The chain runs to 431 residues: MSENQVIKPGGRLVGEVQVPGDKSISHRAIMLGALGEGETVVRGLLRGEDNLATLEAFRSMGVAFCEDGDGALRIAGRGLHGLQEPQDVIDCGNSGTTMRLMTGLLAGQQFFSVMTGDRFLRKRPMKRVVGPLTAMGAHILGRAGGEYAPLALQGKTLQGITHHSAVASAQVKSALLLGGLYAEGPTTVHEPHRSRDHSERMLTWFGADVRPFEGGVTLHPGSCLKGGEVIVPGDISSAAFFMVAALIVPGSELLIRQVGVNPTRSGVIDILRQMGGNIELLNERDCSGEPVADILVKASDLKGVEIGGAVIPRAIDEFPVISVAAAFAEGRTVIRDARELRVKETDRIASMCSQMGALGALVEPREDGMVITGGPSLGAAKVSSLGDHRIGMSMAVAALRASAPVTVTDTECTATSFPGFWELFNSVREH.

Lys23, Ser24, and Arg28 together coordinate 3-phosphoshikimate. A phosphoenolpyruvate-binding site is contributed by Lys23. Gly96 and Arg124 together coordinate phosphoenolpyruvate. 3-phosphoshikimate is bound by residues Ser169, Gln171, Asp317, and Lys344. Gln171 contacts phosphoenolpyruvate. Asp317 functions as the Proton acceptor in the catalytic mechanism. Residues Arg348 and Arg390 each contribute to the phosphoenolpyruvate site.

It belongs to the EPSP synthase family. Monomer.

It is found in the cytoplasm. It catalyses the reaction 3-phosphoshikimate + phosphoenolpyruvate = 5-O-(1-carboxyvinyl)-3-phosphoshikimate + phosphate. It functions in the pathway metabolic intermediate biosynthesis; chorismate biosynthesis; chorismate from D-erythrose 4-phosphate and phosphoenolpyruvate: step 6/7. In terms of biological role, catalyzes the transfer of the enolpyruvyl moiety of phosphoenolpyruvate (PEP) to the 5-hydroxyl of shikimate-3-phosphate (S3P) to produce enolpyruvyl shikimate-3-phosphate and inorganic phosphate. The chain is 3-phosphoshikimate 1-carboxyvinyltransferase from Syntrophotalea carbinolica (strain DSM 2380 / NBRC 103641 / GraBd1) (Pelobacter carbinolicus).